Reading from the N-terminus, the 192-residue chain is MSIQNTFPSYQSLTLALNQQAVALTAAEMHGLISGLLCGGSRDAGWQSLVYDLTNEGVAFPQALSLPLQQLHEITRETLEDDDFMFQLMMPEGETVSVFDRADALSGWVNHFLLGLGMMQPKLAQVKDEVGEAIDDLRNIAQLGYEEDEDQEELEHSLEEVVEYVRMAAILCHTEFTRRKPTAPENAKPTLH.

It belongs to the UPF0149 family.

The sequence is that of UPF0149 protein Spro_3920 from Serratia proteamaculans (strain 568).